Consider the following 567-residue polypeptide: Urease subunit alpha (567 aa).

Positions 129–567 (GGVDSHIHFI…LPLAQRYFLF (439 aa)) constitute a Urease domain. The Ni(2+) site is built by His-134, His-136, and Lys-217. Lys-217 is modified (N6-carboxylysine). His-219 is a substrate binding site. 2 residues coordinate Ni(2+): His-246 and His-272. His-320 (proton donor) is an active-site residue. Position 360 (Asp-360) interacts with Ni(2+).

The protein belongs to the metallo-dependent hydrolases superfamily. Urease alpha subunit family. Heterotrimer of UreA (gamma), UreB (beta) and UreC (alpha) subunits. Three heterotrimers associate to form the active enzyme. It depends on Ni cation as a cofactor. Carboxylation allows a single lysine to coordinate two nickel ions.

It localises to the cytoplasm. It catalyses the reaction urea + 2 H2O + H(+) = hydrogencarbonate + 2 NH4(+). Its pathway is nitrogen metabolism; urea degradation; CO(2) and NH(3) from urea (urease route): step 1/1. This Pseudomonas putida (strain ATCC 700007 / DSM 6899 / JCM 31910 / BCRC 17059 / LMG 24140 / F1) protein is Urease subunit alpha.